We begin with the raw amino-acid sequence, 350 residues long: Transmembrane protein 185A (350 aa).

The next 7 membrane-spanning stretches (helical) occupy residues 16–36 (LIYA…DGII), 41–61 (WAVF…ASVG), 81–101 (FKAM…EVLV), 111–131 (FWLL…AACV), 177–197 (ILMS…VLFL), 211–231 (ITMA…EILL), and 240–260 (AFSC…LMAT). Positions 298-350 (DLHHEDNEETEETPVPEPPKIAPMFRKKARVVITQSPGKYVLPPPKLNIEMPD) are mediates interaction with MAP1B.

The protein belongs to the TMEM185 family. In terms of assembly, interacts with MAP1B.

The protein resides in the cell projection. The protein localises to the dendrite. It is found in the membrane. This is Transmembrane protein 185A (TMEM185A) from Homo sapiens (Human).